The primary structure comprises 239 residues: NAD(P)H-quinone oxidoreductase subunit K, chloroplastic (239 aa).

4 residues coordinate [4Fe-4S] cluster: Cys43, Cys44, Cys108, and Cys139. The segment at 217–239 (KSSVSSRELGNESGKEDVSIQNK) is disordered. Over residues 225 to 239 (LGNESGKEDVSIQNK) the composition is skewed to basic and acidic residues.

Belongs to the complex I 20 kDa subunit family. In terms of assembly, NDH is composed of at least 16 different subunits, 5 of which are encoded in the nucleus. The cofactor is [4Fe-4S] cluster.

It is found in the plastid. The protein resides in the chloroplast thylakoid membrane. It catalyses the reaction a plastoquinone + NADH + (n+1) H(+)(in) = a plastoquinol + NAD(+) + n H(+)(out). The enzyme catalyses a plastoquinone + NADPH + (n+1) H(+)(in) = a plastoquinol + NADP(+) + n H(+)(out). In terms of biological role, NDH shuttles electrons from NAD(P)H:plastoquinone, via FMN and iron-sulfur (Fe-S) centers, to quinones in the photosynthetic chain and possibly in a chloroplast respiratory chain. The immediate electron acceptor for the enzyme in this species is believed to be plastoquinone. Couples the redox reaction to proton translocation, and thus conserves the redox energy in a proton gradient. In Acorus calamus var. americanus (American sweet flag), this protein is NAD(P)H-quinone oxidoreductase subunit K, chloroplastic.